A 435-amino-acid polypeptide reads, in one-letter code: Serine--tRNA ligase (435 aa).

Thr233–Glu235 is a binding site for L-serine. Arg264–Glu266 provides a ligand contact to ATP. L-serine is bound at residue Glu287. Glu351 to Ser354 contributes to the ATP binding site. L-serine is bound at residue Ser386.

It belongs to the class-II aminoacyl-tRNA synthetase family. Type-1 seryl-tRNA synthetase subfamily. Homodimer. The tRNA molecule binds across the dimer.

The protein localises to the cytoplasm. The catalysed reaction is tRNA(Ser) + L-serine + ATP = L-seryl-tRNA(Ser) + AMP + diphosphate + H(+). It carries out the reaction tRNA(Sec) + L-serine + ATP = L-seryl-tRNA(Sec) + AMP + diphosphate + H(+). The protein operates within aminoacyl-tRNA biosynthesis; selenocysteinyl-tRNA(Sec) biosynthesis; L-seryl-tRNA(Sec) from L-serine and tRNA(Sec): step 1/1. In terms of biological role, catalyzes the attachment of serine to tRNA(Ser). Is also able to aminoacylate tRNA(Sec) with serine, to form the misacylated tRNA L-seryl-tRNA(Sec), which will be further converted into selenocysteinyl-tRNA(Sec). This is Serine--tRNA ligase from Anaeromyxobacter dehalogenans (strain 2CP-C).